Consider the following 59-residue polypeptide: uncharacterized protein (59 aa).

This is an uncharacterized protein from Sulfolobus islandicus rod-shaped virus 1 (SIRV-1).